A 117-amino-acid chain; its full sequence is Large ribosomal subunit protein uL24 (117 aa).

The protein belongs to the universal ribosomal protein uL24 family. Part of the 50S ribosomal subunit.

Its function is as follows. One of two assembly initiator proteins, it binds directly to the 5'-end of the 23S rRNA, where it nucleates assembly of the 50S subunit. Functionally, one of the proteins that surrounds the polypeptide exit tunnel on the outside of the subunit. The chain is Large ribosomal subunit protein uL24 from Trichormus variabilis (strain ATCC 29413 / PCC 7937) (Anabaena variabilis).